The sequence spans 107 residues: Iron-binding protein IscA (107 aa).

Residues Cys35, Cys99, and Cys101 each contribute to the Fe cation site.

It belongs to the HesB/IscA family. As to quaternary structure, homodimer; may form tetramers and higher multimers. Fe cation is required as a cofactor.

Functionally, is able to transfer iron-sulfur clusters to apo-ferredoxin. Multiple cycles of [2Fe2S] cluster formation and transfer are observed, suggesting that IscA acts catalytically. Recruits intracellular free iron so as to provide iron for the assembly of transient iron-sulfur cluster in IscU in the presence of IscS, L-cysteine and the thioredoxin reductase system TrxA/TrxB. The polypeptide is Iron-binding protein IscA (Cronobacter sakazakii (strain ATCC BAA-894) (Enterobacter sakazakii)).